Reading from the N-terminus, the 289-residue chain is Elongation factor Ts (289 aa).

Residues 80–83 form an involved in Mg(2+) ion dislocation from EF-Tu region; that stretch reads TDFV.

Belongs to the EF-Ts family.

It localises to the cytoplasm. In terms of biological role, associates with the EF-Tu.GDP complex and induces the exchange of GDP to GTP. It remains bound to the aminoacyl-tRNA.EF-Tu.GTP complex up to the GTP hydrolysis stage on the ribosome. The protein is Elongation factor Ts of Francisella tularensis subsp. holarctica (strain LVS).